The sequence spans 173 residues: Thiol-disulfide oxidoreductase ResA (173 aa).

Residues 10-29 (VIILLILCGAVGFTLYQGFF) traverse the membrane as a helical; Signal-anchor for type II membrane protein segment. In terms of domain architecture, Thioredoxin spans 35–173 (MQIGKEAPNF…LEGYLQKITP (139 aa)). A disulfide bridge links C73 with C76.

It belongs to the thioredoxin family. ResA subfamily.

It is found in the cell membrane. It functions in the pathway protein modification; cytochrome c assembly. In terms of biological role, thiol-disulfide oxidoreductase which is required in disulfide reduction during c-type cytochrome synthesis. May accept reducing equivalents from CcdA, leading to breakage of disulfide bonds in apocytochrome c; following this reduction heme can be covalently attached. This chain is Thiol-disulfide oxidoreductase ResA, found in Bacillus cereus (strain ZK / E33L).